Reading from the N-terminus, the 369-residue chain is 3-methylarginine biosynthesis aminotransferase ArgM (369 aa).

Lysine 216 is subject to N6-(pyridoxal phosphate)lysine.

This sequence belongs to the class-I pyridoxal-phosphate-dependent aminotransferase family. Requires pyridoxal 5'-phosphate as cofactor.

It catalyses the reaction L-arginine + 2-oxoglutarate = 5-guanidino-2-oxopentanoate + L-glutamate. The catalysed reaction is (3R)-5-guanidino-3-methyl-2-oxopentanoate + L-aspartate = (3R)-3-methyl-L-arginine + oxaloacetate. It participates in antibiotic biosynthesis. In terms of biological role, aminotransferase involved in the formation of the rare amino acid 3-methylarginine (MeArg), which is incorporated into the peptidyl nucleoside antibiotic arginomycin. Catalyzes two rounds of transamination: the transfer of the amino group from L-arginine to 2-oxoglutarate to give glutamate and 5-guanidino-2-oxopentanoic acid, which will be methylated by ArgN. Then, ArgM specifically catalyzes transamination from the donor L-aspartate to the 5-guanidino-3-methyl-2-oxopentanoic acid produced by ArgN, generating the final product, 3-methylarginine. Cannot use arginine analogs, such as D-arginine, L-homoarginine and N-methylarginine for the first transamination. The polypeptide is 3-methylarginine biosynthesis aminotransferase ArgM (Streptomyces arginensis).